The sequence spans 173 residues: Crossover junction endodeoxyribonuclease RuvC (173 aa).

Active-site residues include Asp8, Glu69, and Asp141. Asp8, Glu69, and Asp141 together coordinate Mg(2+).

This sequence belongs to the RuvC family. In terms of assembly, homodimer which binds Holliday junction (HJ) DNA. The HJ becomes 2-fold symmetrical on binding to RuvC with unstacked arms; it has a different conformation from HJ DNA in complex with RuvA. In the full resolvosome a probable DNA-RuvA(4)-RuvB(12)-RuvC(2) complex forms which resolves the HJ. The cofactor is Mg(2+).

It localises to the cytoplasm. It carries out the reaction Endonucleolytic cleavage at a junction such as a reciprocal single-stranded crossover between two homologous DNA duplexes (Holliday junction).. In terms of biological role, the RuvA-RuvB-RuvC complex processes Holliday junction (HJ) DNA during genetic recombination and DNA repair. Endonuclease that resolves HJ intermediates. Cleaves cruciform DNA by making single-stranded nicks across the HJ at symmetrical positions within the homologous arms, yielding a 5'-phosphate and a 3'-hydroxyl group; requires a central core of homology in the junction. The consensus cleavage sequence is 5'-(A/T)TT(C/G)-3'. Cleavage occurs on the 3'-side of the TT dinucleotide at the point of strand exchange. HJ branch migration catalyzed by RuvA-RuvB allows RuvC to scan DNA until it finds its consensus sequence, where it cleaves and resolves the cruciform DNA. In Xylella fastidiosa (strain Temecula1 / ATCC 700964), this protein is Crossover junction endodeoxyribonuclease RuvC.